The sequence spans 160 residues: MATEKVFPMTLEGKAKLENELQELKTVKRKEVVERIKIARSFGDLSENSEYDSAKDEQAFVEGRITTIENMIRNAQIIDAAEAHNGLVTLGNTVTFIELPDGEEETYTIVGSAEADPFEGKISNDSPIAKGLLGHKEGEEVTIQTPAGDMNVKIEKITAS.

The stretch at 10 to 37 (TLEGKAKLENELQELKTVKRKEVVERIK) forms a coiled coil.

The protein belongs to the GreA/GreB family.

Functionally, necessary for efficient RNA polymerase transcription elongation past template-encoded arresting sites. The arresting sites in DNA have the property of trapping a certain fraction of elongating RNA polymerases that pass through, resulting in locked ternary complexes. Cleavage of the nascent transcript by cleavage factors such as GreA or GreB allows the resumption of elongation from the new 3'terminus. GreA releases sequences of 2 to 3 nucleotides. This is Transcription elongation factor GreA from Listeria welshimeri serovar 6b (strain ATCC 35897 / DSM 20650 / CCUG 15529 / CIP 8149 / NCTC 11857 / SLCC 5334 / V8).